The following is a 124-amino-acid chain: Fluoride-specific ion channel FluC (124 aa).

Helical transmembrane passes span 3-23, 34-54, 68-88, and 100-120; these read VLLI…VSNL, IGTL…FIFI, LLLI…IETF, and ALNV…GVLI. Residues glycine 75 and threonine 78 each contribute to the Na(+) site.

This sequence belongs to the fluoride channel Fluc/FEX (TC 1.A.43) family.

It localises to the cell inner membrane. It catalyses the reaction fluoride(in) = fluoride(out). Its activity is regulated as follows. Na(+) is not transported, but it plays an essential structural role and its presence is essential for fluoride channel function. Functionally, fluoride-specific ion channel. Important for reducing fluoride concentration in the cell, thus reducing its toxicity. This is Fluoride-specific ion channel FluC from Coxiella burnetii (strain CbuK_Q154) (Coxiella burnetii (strain Q154)).